The sequence spans 116 residues: Protein Wnt-5a (116 aa).

Serine 1 carries the O-palmitoleoyl serine; by PORCN lipid modification. N-linked (GlcNAc...) asparagine glycans are attached at residues asparagine 69 and asparagine 83. Residues cysteine 82 and cysteine 97 are joined by a disulfide bond.

Belongs to the Wnt family. Post-translationally, palmitoleoylation is required for efficient binding to frizzled receptors. Depalmitoleoylation leads to Wnt signaling pathway inhibition.

Its subcellular location is the secreted. It is found in the extracellular space. It localises to the extracellular matrix. Functionally, ligand for members of the frizzled family of seven transmembrane receptors. Can activate or inhibit canonical Wnt signaling, depending on receptor context. Required during embryogenesis for extension of the primary anterior-posterior axis. The chain is Protein Wnt-5a (WNT-5A) from Alopias vulpinus (Common thresher shark).